A 647-amino-acid polypeptide reads, in one-letter code: Carotenoid phi-ring synthase (647 aa).

Residues A67, 86–87, K94, and Y120 each bind FAD; that span reads EA. Positions 322–416 constitute a Rieske domain; sequence VASIPKREVP…VREAGEMLVI (95 aa). Positions 362, 364, 380, and 383 each coordinate [2Fe-2S] cluster. Positions 601 and 612 each coordinate FAD.

The protein belongs to the carotenoid/retinoid oxidoreductase family. FAD serves as cofactor. The cofactor is [2Fe-2S] cluster.

It catalyses the reaction a carotenoid beta-end derivative + 2 A = a carotenoid phi-end derivative + 2 AH2. Its pathway is carotenoid biosynthesis. In terms of biological role, involved in the biosynthesis of chlorobactene, a carotenoid with aromatic end group. Catalyzes the introduction of two additional double bonds into the ionone ring of gamma-carotene to produce chlorobactene. The reaction includes an intramolecular methyl transfer from position C1 to position C2 of the ring. In Chlorobaculum tepidum (strain ATCC 49652 / DSM 12025 / NBRC 103806 / TLS) (Chlorobium tepidum), this protein is Carotenoid phi-ring synthase.